The following is a 316-amino-acid chain: IDS-like terpene synthase 2 (316 aa).

Residues Asp-69 and Asp-73 each contribute to the Mg(2+) site.

It belongs to the FPP/GGPP synthase family. Mg(2+) serves as cofactor.

The enzyme catalyses (2E)-geranyl diphosphate + H2O = linalool + diphosphate. It catalyses the reaction (2E,6E)-farnesyl diphosphate + H2O = (6E)-nerolidol + diphosphate. In terms of biological role, terpene synthase that shows monoterpene synthase activity and produces linalool, using geranyl diphosphate (GPP) as substrate. Also shows sesquiterpene synthase activity as it is able to convert farnesyl diphosphate (FPP) into (E)-nerolidol. The sequence is that of IDS-like terpene synthase 2 from Melampsora larici-populina (strain 98AG31 / pathotype 3-4-7) (Poplar leaf rust fungus).